A 299-amino-acid polypeptide reads, in one-letter code: Oxygen-dependent coproporphyrinogen-III oxidase (299 aa).

A substrate-binding site is contributed by Ser92. 2 residues coordinate Mn(2+): His96 and His106. The active-site Proton donor is His106. 108–110 is a binding site for substrate; that stretch reads NVR. 2 residues coordinate Mn(2+): His145 and His175. The important for dimerization stretch occupies residues 240–275; sequence YVEFNLVWDRGTLFGLQTGGRTESILMSMPPLVRWE. Residue 258-260 coordinates substrate; sequence GGR.

It belongs to the aerobic coproporphyrinogen-III oxidase family. Homodimer. The cofactor is Mn(2+).

The protein localises to the cytoplasm. It carries out the reaction coproporphyrinogen III + O2 + 2 H(+) = protoporphyrinogen IX + 2 CO2 + 2 H2O. Its pathway is porphyrin-containing compound metabolism; protoporphyrin-IX biosynthesis; protoporphyrinogen-IX from coproporphyrinogen-III (O2 route): step 1/1. Its function is as follows. Involved in the heme biosynthesis. Catalyzes the aerobic oxidative decarboxylation of propionate groups of rings A and B of coproporphyrinogen-III to yield the vinyl groups in protoporphyrinogen-IX. This is Oxygen-dependent coproporphyrinogen-III oxidase from Escherichia coli O7:K1 (strain IAI39 / ExPEC).